Reading from the N-terminus, the 305-residue chain is Thyroxine 5-deiodinase (305 aa).

Residues 1-43 are Cytoplasmic-facing; it reads MPGQAGRRRLVGGGCRGSQGPLGGAATMLRSLLLHSLRLCAQT. The helical; Signal-anchor for type II membrane protein transmembrane segment at 44-63 threads the bilayer; the sequence is ASCLVLFPRFLGTACMLWLL. The Extracellular portion of the chain corresponds to 64-305; it reads DFLCIRKHLL…QLHGPQPRRV (242 aa). Residues 79-98 form a disordered region; it reads GEPETEVELNSDGDEVPPDD. Positions 82 to 96 are enriched in acidic residues; sequence ETEVELNSDGDEVPP. Selenocysteine 171 is an active-site residue. Position 171 (selenocysteine 171) is a non-standard amino acid, selenocysteine.

This sequence belongs to the iodothyronine deiodinase family. As to quaternary structure, monomer. Homodimer. May undergo minor heretodimerization with DIO1 and DIO2. As to expression, expressed in brain only.

Its subcellular location is the cell membrane. The protein localises to the endosome membrane. It catalyses the reaction 3,3',5'-triiodo-L-thyronine + iodide + A + H(+) = L-thyroxine + AH2. The catalysed reaction is 3,3'-diiodo-L-thyronine + iodide + A + H(+) = 3,3',5-triiodo-L-thyronine + AH2. The enzyme catalyses 3-iodo-L-thyronine + iodide + A + H(+) = 3,5-diiodo-L-thyronine + AH2. It carries out the reaction L-thyronine + iodide + A + H(+) = 3-iodo-L-thyronine + AH2. It catalyses the reaction 3',5'-diiodo-L-thyronine + iodide + A + H(+) = 3,3',5'-triiodo-L-thyronine + AH2. The catalysed reaction is 3'-iodo-L-thyronine + iodide + A + H(+) = 3,3'-diiodo-L-thyronine + AH2. The enzyme catalyses 3,3',5'-triiodothyronamine + iodide + A + H(+) = 3,3',5,5'-tetraiodothyronamine + AH2. It carries out the reaction 3',5'-diiodothyronamine + iodide + A + H(+) = 3,3',5'-triiodothyronamine + AH2. It catalyses the reaction 3,3'-diiodothyronamine + iodide + A + H(+) = 3,3',5-triiodothyronamine + AH2. The catalysed reaction is 3-iodothyronamine + iodide + A + H(+) = 3,5-diiodothyronamine + AH2. The enzyme catalyses 3'-iodothyronamine + iodide + A + H(+) = 3,3'-diiodothyronamine + AH2. It carries out the reaction thyronamine + iodide + A + H(+) = 3-iodothyronamine + AH2. In terms of biological role, plays a crucial role in the metabolism of thyroid hormones (TH) and has specific roles in TH activation and inactivation by deiodination, particularly in different tissues. Catalyzes the deiodination of L-thyroxine (T4) to 3,3',5'-triiodothyronine (rT3), 3,5-diiodothyronine (3,5-T2) to 3-monoiodothyronine (3-T1), rT3 to 3',5'-diiodothyronine (3',5'-T2) and 3,3'-diiodothyronine (3,3'-T2) to 3'-monoiodothyronine (3'-T1) via inner-ring deiodination (IRD). Catalyzes the deiodination of 3,5,3'-triiodothyronine (T3) to 3,3'-diiodothyronine (3,3'-T2) via IRD. Catalyzes the deiodination of 3-T1 to L-thyronine (T0) via outer-ring deiodination (ORD). Catalyzes the tyrosyl ring deiodinations of 3,3',5,5'-tetraiodothyronamine, 3,3',5'-triiodothyronamine, 3,5,3'-triiodothyronamine, 3,5-diiodothyronamine, 3,3'-diiodothyronamine and 3-iodothyronamine. This is Thyroxine 5-deiodinase (DIO3) from Sus scrofa (Pig).